The chain runs to 589 residues: Mediator of RNA polymerase II transcription subunit 26 (589 aa).

The TFIIS N-terminal domain maps to 10-87; sequence QMRDRLLQAI…RNWQKLIEPG (78 aa). 3 disordered regions span residues 83–233, 247–320, and 363–441; these read LIEP…TKLP, ARVD…DGPS, and LETK…PIPE. Over residues 190–213 the composition is skewed to basic and acidic residues; it reads LLEKDDEVPSDRIRLEHLDNDRHN. The span at 259 to 268 shows a compositional bias: low complexity; it reads SPRYSSSPRS. A compositionally biased stretch (polar residues) spans 276–297; that stretch reads KRSTTYAPKGTLSSPSLNSAQV. Composition is skewed to basic and acidic residues over residues 398-412 and 424-435; these read SEDR…RRLT and TPKESHQEEECH.

The protein belongs to the Mediator complex subunit 26 family. Component of the Mediator complex.

It localises to the nucleus. In terms of biological role, component of the Mediator complex, a coactivator involved in the regulated transcription of nearly all RNA polymerase II-dependent genes. Mediator functions as a bridge to convey information from gene-specific regulatory proteins to the basal RNA polymerase II transcription machinery. Mediator is recruited to promoters by direct interactions with regulatory proteins and serves as a scaffold for the assembly of a functional preinitiation complex with RNA polymerase II and the general transcription factors. In Danio rerio (Zebrafish), this protein is Mediator of RNA polymerase II transcription subunit 26 (med26).